Consider the following 255-residue polypeptide: D-aminoacyl-tRNA deacylase (255 aa).

Belongs to the DtdA deacylase family. As to quaternary structure, monomer. Requires Zn(2+) as cofactor.

The catalysed reaction is a D-aminoacyl-tRNA + H2O = a tRNA + a D-alpha-amino acid + H(+). It carries out the reaction glycyl-tRNA(Ala) + H2O = tRNA(Ala) + glycine + H(+). Its function is as follows. D-aminoacyl-tRNA deacylase with broad substrate specificity. By recycling D-aminoacyl-tRNA to D-amino acids and free tRNA molecules, this enzyme counteracts the toxicity associated with the formation of D-aminoacyl-tRNA entities in vivo. The polypeptide is D-aminoacyl-tRNA deacylase (Methanocaldococcus jannaschii (strain ATCC 43067 / DSM 2661 / JAL-1 / JCM 10045 / NBRC 100440) (Methanococcus jannaschii)).